The chain runs to 502 residues: MEFSVKSGSPEKQRSACIVVGVFEPRRLSPVAEQLDKISDGYISSLLRRGDLEGKPGQMLLLHQVPGVLSERVLLVGCGKERELGERQYKEIIQKTINTLNETGSMEAVCFLTELHVKGRDTYWKVRQAVEATKDGLYTFDQFKSVKPETRRPLRKLVFNVPTRRELNLGEKAITHGLAIASGVKACKDLGNMPPNIANPAYLASQARRLADDYETITTKIIGEQEMEKLGMSSYLAVGRGSKNESMMSIIEYKGHPDSEAKPIVLVGKGLTFDSGGISLKPGEGMDEMKYDMCGAASVFGTMKALAKLNLPVNVIGVLAGCENMPGSNAYRPGDILTTMSGQTVEVLNTDAEGRLVLCDALTYVERFEPDCVVDVATLTGACVIALGHHITGVLSNHNPLAHELVNASEQSSDRAWRLPMADEYHEQLKSPFADMANIGGRPGGTITAACFLSKFAKKYNWAHLDIAGTAWKSGAAKGSTGRPVSMLVQFLLNRSGQETEE.

Lysine 269 and aspartate 274 together coordinate Mn(2+). Lysine 281 is an active-site residue. Aspartate 292, aspartate 351, and glutamate 353 together coordinate Mn(2+). The active site involves arginine 355.

The protein belongs to the peptidase M17 family. Requires Mn(2+) as cofactor.

It localises to the cytoplasm. It catalyses the reaction Release of an N-terminal amino acid, Xaa-|-Yaa-, in which Xaa is preferably Leu, but may be other amino acids including Pro although not Arg or Lys, and Yaa may be Pro. Amino acid amides and methyl esters are also readily hydrolyzed, but rates on arylamides are exceedingly low.. The enzyme catalyses Release of an N-terminal amino acid, preferentially leucine, but not glutamic or aspartic acids.. Functionally, presumably involved in the processing and regular turnover of intracellular proteins. Catalyzes the removal of unsubstituted N-terminal amino acids from various peptides. The protein is Probable cytosol aminopeptidase of Vibrio vulnificus (strain CMCP6).